Consider the following 558-residue polypeptide: Nucleoprotein (558 aa).

Positions 54 to 237 (MRKEKRDDKD…ITEQQSSINI (184 aa)) are binding site for the cap structure m7GTP. Asp-382 and Glu-384 together coordinate Mg(2+). Residues Asp-382 and Glu-384 each coordinate Mn(2+). Glu-392, Cys-499, His-502, and Cys-518 together coordinate Zn(2+). A Mg(2+)-binding site is contributed by Asp-522. Residue Asp-522 coordinates Mn(2+).

It belongs to the arenaviridae nucleocapsid protein family. In terms of assembly, homomultimerizes to form the nucleocapsid. Binds to viral genomic RNA. Interacts with glycoprotein G2. Interacts with protein Z; this interaction probably directs the encapsidated genome to budding sites. Interacts with protein L; this interaction does not interfere with Z-L interaction. Interacts with host IKBKE (via Protein kinase domain); the interaction inhibits IKBKE kinase activity.

The protein localises to the virion. It localises to the host cytoplasm. Functionally, encapsidates the genome, protecting it from nucleases. The encapsidated genomic RNA is termed the nucleocapsid (NC). Serves as template for viral transcription and replication. The increased presence of protein N in host cell does not seem to trigger the switch from transcription to replication as observed in other negative strain RNA viruses. Through the interaction with host IKBKE, strongly inhibits the phosphorylation and nuclear translocation of host IRF3, a protein involved in interferon activation pathway, leading to the inhibition of interferon-beta and IRF3-dependent promoters activation. Also encodes a functional 3'-5' exoribonuclease that degrades preferentially dsRNA substrates and thereby participates in the suppression of interferon induction. The chain is Nucleoprotein from Lymphocytic choriomeningitis virus (strain Armstrong) (LCMV).